A 429-amino-acid chain; its full sequence is UDP-N-acetylglucosamine 1-carboxyvinyltransferase (429 aa).

Residue 22-23 participates in phosphoenolpyruvate binding; the sequence is KN. Residue arginine 102 participates in UDP-N-acetyl-alpha-D-glucosamine binding. The active-site Proton donor is the cysteine 126. The residue at position 126 (cysteine 126) is a 2-(S-cysteinyl)pyruvic acid O-phosphothioketal. Residues 131–135, aspartate 316, and isoleucine 338 each bind UDP-N-acetyl-alpha-D-glucosamine; that span reads RPVDL.

It belongs to the EPSP synthase family. MurA subfamily.

It localises to the cytoplasm. It catalyses the reaction phosphoenolpyruvate + UDP-N-acetyl-alpha-D-glucosamine = UDP-N-acetyl-3-O-(1-carboxyvinyl)-alpha-D-glucosamine + phosphate. It functions in the pathway cell wall biogenesis; peptidoglycan biosynthesis. Its function is as follows. Cell wall formation. Adds enolpyruvyl to UDP-N-acetylglucosamine. This is UDP-N-acetylglucosamine 1-carboxyvinyltransferase from Methylorubrum extorquens (strain CM4 / NCIMB 13688) (Methylobacterium extorquens).